The sequence spans 891 residues: uncharacterized protein (891 aa).

This is an uncharacterized protein from Ictalurid herpesvirus 1 (strain Auburn) (IcHV-1).